We begin with the raw amino-acid sequence, 374 residues long: Large ribosomal subunit protein uL4 (374 aa).

Positions Glu-336–Ala-355 are disordered.

It belongs to the universal ribosomal protein uL4 family.

The polypeptide is Large ribosomal subunit protein uL4 (RPL4) (Trypanosoma brucei brucei).